The primary structure comprises 226 residues: Vacuolar protein sorting-associated protein 20 (226 aa).

Glycine 2 is lipidated: N-myristoyl glycine.

This sequence belongs to the SNF7 family. As to quaternary structure, component of the endosomal sorting required for transport complex III (ESCRT-III).

It is found in the endosome membrane. The protein resides in the vacuole membrane. It localises to the cytoplasm. Its subcellular location is the cell cortex. Its function is as follows. Class E VPS protein implicated in concentration and sorting of cargo proteins of the multivesicular body (MVB) for incorporation into intralumenal vesicles. The lumenal sequestrated membrane proteins will be targeted into the vacuole after fusion of the endosome with the vacuole. This chain is Vacuolar protein sorting-associated protein 20 (vps20), found in Schizosaccharomyces pombe (strain 972 / ATCC 24843) (Fission yeast).